We begin with the raw amino-acid sequence, 214 residues long: Ribosomal RNA small subunit methyltransferase G (214 aa).

Residues glycine 58, 109-110, and arginine 126 each bind S-adenosyl-L-methionine; that span reads AE.

This sequence belongs to the methyltransferase superfamily. RNA methyltransferase RsmG family.

The protein localises to the cytoplasm. Functionally, specifically methylates the N7 position of a guanine in 16S rRNA. The chain is Ribosomal RNA small subunit methyltransferase G from Ureaplasma parvum serovar 3 (strain ATCC 700970).